The sequence spans 856 residues: Translation initiation factor IF-2 (856 aa).

Disordered regions lie at residues 1–248 (MSDN…ARAR) and 254–273 (KRAR…QQKQ). Over residues 22–38 (ETGQVKQSFSHGRSNTV) the composition is skewed to polar residues. Residues 83–93 (APRPAPAPIPT) are compositionally biased toward pro residues. Positions 100–150 (LERREQQERLLREAEEARMAALEETRRREERAKAEATEEERRRAEENRRAE) are enriched in basic and acidic residues. The segment covering 156–196 (AAAAAAAAATAEAETAAAAPREEAPAAAGTAEEAPRTSSST) has biased composition (low complexity). Residues 197 to 209 (MPPPRRFTPVPSP) are compositionally biased toward pro residues. Positions 210-229 (KRPEPPRPQQRDRKGDDRRQ) are enriched in basic and acidic residues. Positions 356–526 (PRPPVVTIMG…ELQAELLELK (171 aa)) constitute a tr-type G domain. The G1 stretch occupies residues 365–372 (GHVDHGKT). 365–372 (GHVDHGKT) is a binding site for GTP. Positions 390-394 (GITQH) are G2. Residues 412–415 (DTPG) are G3. GTP is bound by residues 412–416 (DTPGH) and 466–469 (NKMD). The interval 466-469 (NKMD) is G4. The interval 502–504 (SAL) is G5.

It belongs to the TRAFAC class translation factor GTPase superfamily. Classic translation factor GTPase family. IF-2 subfamily.

The protein resides in the cytoplasm. Its function is as follows. One of the essential components for the initiation of protein synthesis. Protects formylmethionyl-tRNA from spontaneous hydrolysis and promotes its binding to the 30S ribosomal subunits. Also involved in the hydrolysis of GTP during the formation of the 70S ribosomal complex. This Rhizorhabdus wittichii (strain DSM 6014 / CCUG 31198 / JCM 15750 / NBRC 105917 / EY 4224 / RW1) (Sphingomonas wittichii) protein is Translation initiation factor IF-2.